The following is a 308-amino-acid chain: Ribosomal RNA small subunit methyltransferase H (308 aa).

S-adenosyl-L-methionine-binding positions include 34–36 (GGH), aspartate 54, phenylalanine 80, aspartate 101, and glutamine 108.

The protein belongs to the methyltransferase superfamily. RsmH family.

The protein localises to the cytoplasm. The catalysed reaction is cytidine(1402) in 16S rRNA + S-adenosyl-L-methionine = N(4)-methylcytidine(1402) in 16S rRNA + S-adenosyl-L-homocysteine + H(+). Functionally, specifically methylates the N4 position of cytidine in position 1402 (C1402) of 16S rRNA. The polypeptide is Ribosomal RNA small subunit methyltransferase H (Ureaplasma parvum serovar 3 (strain ATCC 27815 / 27 / NCTC 11736)).